The sequence spans 905 residues: DNA mismatch repair protein MutS (905 aa).

The segment at 272-292 (KKPPLSPPSREATGSTMAIDP) is disordered. 654 to 661 (GPNMAGKS) contacts ATP.

It belongs to the DNA mismatch repair MutS family.

This protein is involved in the repair of mismatches in DNA. It is possible that it carries out the mismatch recognition step. This protein has a weak ATPase activity. This chain is DNA mismatch repair protein MutS, found in Rhodopseudomonas palustris (strain BisB18).